A 49-amino-acid polypeptide reads, in one-letter code: MVIGLVIFVSVAAAIVGVLSNVLDMLMYVEENNEEDARIKEEQELLLLY.

A topological domain (virion surface) is located at residue M1. A helical membrane pass occupies residues 2–22 (VIGLVIFVSVAAAIVGVLSNV). Over 23-49 (LDMLMYVEENNEEDARIKEEQELLLLY) the chain is Intravirion.

The protein belongs to the orthopoxvirus OPG058 family.

The protein resides in the virion membrane. It localises to the host membrane. Its function is as follows. May play a role in cell adhesion and is important for virus virulence in vivo, although it is not required for the virus life cycle in cell cultures. The sequence is that of Protein OPG059 (OPG059) from Vaccinia virus (strain Western Reserve) (VACV).